The following is an 89-amino-acid chain: Cell division protein ZapA (89 aa).

It belongs to the ZapA family. Type 2 subfamily. As to quaternary structure, homodimer. Interacts with FtsZ.

Its subcellular location is the cytoplasm. In terms of biological role, activator of cell division through the inhibition of FtsZ GTPase activity, therefore promoting FtsZ assembly into bundles of protofilaments necessary for the formation of the division Z ring. It is recruited early at mid-cell but it is not essential for cell division. This chain is Cell division protein ZapA, found in Bacillus mycoides (strain KBAB4) (Bacillus weihenstephanensis).